The chain runs to 82 residues: Small ribosomal subunit protein bS16 (82 aa).

The protein belongs to the bacterial ribosomal protein bS16 family.

This chain is Small ribosomal subunit protein bS16, found in Bdellovibrio bacteriovorus (strain ATCC 15356 / DSM 50701 / NCIMB 9529 / HD100).